Here is a 147-residue protein sequence, read N- to C-terminus: Arginine repressor (147 aa).

This sequence belongs to the ArgR family.

It localises to the cytoplasm. It participates in amino-acid biosynthesis; L-arginine biosynthesis [regulation]. Functionally, regulates arginine biosynthesis genes. This chain is Arginine repressor, found in Chlamydia felis (strain Fe/C-56) (Chlamydophila felis).